We begin with the raw amino-acid sequence, 265 residues long: Thymidine kinase 2, mitochondrial (265 aa).

The transit peptide at 1–33 (MLLWPLRGWAARALRCFGPGSRGSPASGPGPRR) directs the protein to the mitochondrion. The span at 20 to 32 (GSRGSPASGPGPR) shows a compositional bias: low complexity. Residues 20–47 (GSRGSPASGPGPRRVQRRAWPPDKEQEK) are disordered. 57 to 65 (GNIASGKTT) provides a ligand contact to ATP. The active-site Proton acceptor is Glu-133.

It belongs to the DCK/DGK family. In terms of assembly, monomer. As to expression, predominantly expressed in liver, pancreas, muscle, and brain.

The protein resides in the mitochondrion. The enzyme catalyses thymidine + ATP = dTMP + ADP + H(+). The catalysed reaction is 2'-deoxycytidine + ATP = dCMP + ADP + H(+). It catalyses the reaction 2'-deoxyuridine + ATP = dUMP + ADP + H(+). In terms of biological role, phosphorylates thymidine, deoxycytidine, and deoxyuridine in the mitochondrial matrix. In non-replicating cells, where cytosolic dNTP synthesis is down-regulated, mtDNA synthesis depends solely on TK2 and DGUOK. Widely used as target of antiviral and chemotherapeutic agents. This is Thymidine kinase 2, mitochondrial from Homo sapiens (Human).